The chain runs to 43 residues: Structural protein ORF5a (43 aa).

A helical membrane pass occupies residues 2 to 22 (FSQIGAFLDSALLLLVAFFAV).

It belongs to the arteriviridae ORF5a protein family. As to quaternary structure, interacts with proteins GP2B and GP4.

It is found in the virion. Its subcellular location is the host cell membrane. Functionally, minor virion component that plays an essential role in virus infectivity. This chain is Structural protein ORF5a, found in Sus scrofa (Pig).